Reading from the N-terminus, the 151-residue chain is UPF0208 membrane protein YfbV (151 aa).

The next 2 membrane-spanning stretches (helical) occupy residues 46–65 and 69–91; these read YAIR…QIAL and LGPA…WWLG.

Belongs to the UPF0208 family.

The protein localises to the cell inner membrane. This is UPF0208 membrane protein YfbV from Shigella flexneri serotype 5b (strain 8401).